The following is a 329-amino-acid chain: Carbonic anhydrase (329 aa).

Residues 1–108 (MSTASAFAIN…AAARIDQITA (108 aa)) form a chloroplast transit peptide-like region.

Belongs to the beta-class carbonic anhydrase family. As to quaternary structure, homohexamer.

It localises to the cytoplasm. The catalysed reaction is hydrogencarbonate + H(+) = CO2 + H2O. Functionally, reversible hydration of carbon dioxide. The protein is Carbonic anhydrase of Flaveria pringlei.